Here is a 348-residue protein sequence, read N- to C-terminus: Erlin-1 (348 aa).

At 1–7 the chain is on the cytoplasmic side; it reads MNMTQAR. Residues 8–28 traverse the membrane as a helical segment; sequence LLVAAVVGLVAILLYASIHKI. Topologically, residues 29 to 348 are lumenal; it reads EEGHLAVYYR…SPIQNKENAG (320 aa). Residue Asn108 is glycosylated (N-linked (GlcNAc...) asparagine). Residue Lys269 is modified to N6-acetyllysine. Over residues 318–336 the composition is skewed to basic and acidic residues; that stretch reads DGRTGREDSLPPEEAREPS. The tract at residues 318 to 348 is disordered; sequence DGRTGREDSLPPEEAREPSGESPIQNKENAG. The span at 339-348 shows a compositional bias: polar residues; the sequence is SPIQNKENAG.

It belongs to the band 7/mec-2 family. In terms of assembly, forms a heteromeric complex with ERLIN2. In complex with ERLIN2, interacts with RNF170. Interacts with AMFR and SYVN1. In terms of processing, deubiquitinated by USP25; leading to stabilization.

The protein localises to the endoplasmic reticulum membrane. Its function is as follows. Component of the ERLIN1/ERLIN2 complex which mediates the endoplasmic reticulum-associated degradation (ERAD) of inositol 1,4,5-trisphosphate receptors (IP3Rs). Involved in regulation of cellular cholesterol homeostasis by regulation the SREBP signaling pathway. Binds cholesterol and may promote ER retention of the SCAP-SREBF complex. This Mus musculus (Mouse) protein is Erlin-1.